Reading from the N-terminus, the 337-residue chain is Large ribosomal subunit protein uL3 (337 aa).

Residues 1-20 (MASIHRPKRGSLAFSPRKRA) are disordered.

This sequence belongs to the universal ribosomal protein uL3 family. Part of the 50S ribosomal subunit. Forms a cluster with proteins L14 and L24e.

Functionally, one of the primary rRNA binding proteins, it binds directly near the 3'-end of the 23S rRNA, where it nucleates assembly of the 50S subunit. The protein is Large ribosomal subunit protein uL3 of Methanosarcina mazei (strain ATCC BAA-159 / DSM 3647 / Goe1 / Go1 / JCM 11833 / OCM 88) (Methanosarcina frisia).